A 75-amino-acid polypeptide reads, in one-letter code: CDC42 small effector protein 1 (75 aa).

Residues Cys10 and Cys11 are each lipidated (S-palmitoyl cysteine). One can recognise a CRIB domain in the interval 30–43 (IGEPTNFVHLTHIG). The segment at 45–75 (GEMADGMQPSGPIKEQMRSKVPHANGRNSLL) is disordered.

The protein belongs to the CDC42SE/SPEC family.

It localises to the cytoplasm. Its subcellular location is the cytoskeleton. The protein resides in the cell membrane. Functionally, probably involved in the organization of the actin cytoskeleton by acting downstream of CDC42, inducing actin filament assembly. This chain is CDC42 small effector protein 1 (cdc42se1), found in Danio rerio (Zebrafish).